A 440-amino-acid polypeptide reads, in one-letter code: Putative epoxide hydrolase (440 aa).

Residues 1 to 21 are disordered; sequence MTKTLAEQPGEGAAPVSPSPS. Positions 1-49 form a signal peptide, tat-type signal; it reads MTKTLAEQPGEGAAPVSPSPSRRALLHGAAGLGALAAGAAVAGPGLAFA.

It belongs to the peptidase S33 family. Predicted to be exported by the Tat system. The position of the signal peptide cleavage has not been experimentally proven.

It catalyses the reaction an epoxide + H2O = an ethanediol. The sequence is that of Putative epoxide hydrolase from Stigmatella aurantiaca (strain DW4/3-1).